Here is a 249-residue protein sequence, read N- to C-terminus: Vacuolar iron transporter homolog 3 (249 aa).

Residues 1–32 (MAMQMNSVVHVSTSPSPSPATSPPPEGKQEHG) are disordered. At 1-74 (MAMQMNSVVH…SGRAQWLRAA (74 aa)) the chain is on the cytoplasmic side. Pro residues predominate over residues 16 to 26 (SPSPATSPPPE). The helical transmembrane segment at 75 to 95 (VLGANDGLVSVASLMIGVGAV) threads the bilayer. The Vacuolar segment spans residues 96-102 (SESGRAM). Residues 103 to 123 (LVSGVAGLVAGACSMAIGEFV) traverse the membrane as a helical segment. At 124–166 (SVYAQYDIEVAAARRRRRQRRRRCDGDGEEEGSGRLPSPFKAA) the chain is on the cytoplasmic side. The chain crosses the membrane as a helical span at residues 167–187 (AASALAFTVGALLPLLAGGFV). Residues 188-193 (RPWAPR) lie on the Vacuolar side of the membrane. The helical transmembrane segment at 194 to 214 (VAAVCAATSAALAGFGALGAA) threads the bilayer. Residues 215-226 (LGGASPARSAAR) lie on the Cytoplasmic side of the membrane. Residues 227–247 (VLLGGWAAMAACYGVLRLFAN) traverse the membrane as a helical segment. Residues 248–249 (LY) lie on the Vacuolar side of the membrane.

It belongs to the CCC1 family.

It is found in the vacuole membrane. The catalysed reaction is Fe(2+)(in) = Fe(2+)(out). In terms of biological role, probable vacuolar iron transporter that may be involved in the regulation of iron distribution throughout the plant. This Oryza sativa subsp. japonica (Rice) protein is Vacuolar iron transporter homolog 3.